A 293-amino-acid polypeptide reads, in one-letter code: MSLYRRLVLLSCLSWPLAGFSATALTNLVAEPFAKLEQDFGGSIGVYAMDTGSGATVSYRAEERFPLCSSFKGFLAAAVLARSQQQAGLLDTPIRYGKNALVPWSPISEKYLTTGMTVAELSAAAVQYSDNAAANLLLKELGGPAGLTAFMRSIGDTTFRLDRWELELNSAIPGDARDTSSPRAVTESLQKLTLGSALAAPQRQQFVDWLKGNTTGNHRIRAAVPADWAVGDKTGTCGVYGTANDYAVVWPTGRAPIVLAVYTRAPNKDDKHSEAVIAAAARLALEGLGVNGQ.

A signal peptide spans 1–24; sequence MSLYRRLVLLSCLSWPLAGFSATA. The Acyl-ester intermediate role is filled by S69. E167 serves as the catalytic Proton acceptor. Substrate is bound at residue 233–235; it reads KTG.

It belongs to the class-A beta-lactamase family.

It carries out the reaction a beta-lactam + H2O = a substituted beta-amino acid. Not inhibited by EDTA, inhibited by clavulanic acid and tazobactam. Hydrolyzes carbapenems, penicillins, cephalosporins and aztreonam with varying efficiency. The chain is Carbapenem-hydrolyzing beta-lactamase KPC (bla) from Klebsiella oxytoca.